A 155-amino-acid chain; its full sequence is Large ribosomal subunit protein uL13 (155 aa).

The protein belongs to the universal ribosomal protein uL13 family. As to quaternary structure, part of the 50S ribosomal subunit.

In terms of biological role, this protein is one of the early assembly proteins of the 50S ribosomal subunit, although it is not seen to bind rRNA by itself. It is important during the early stages of 50S assembly. This is Large ribosomal subunit protein uL13 from Rickettsia felis (strain ATCC VR-1525 / URRWXCal2) (Rickettsia azadi).